The sequence spans 1275 residues: Histone-lysine N-methyltransferase PRDM16 (1275 aa).

Basic residues predominate over residues 1 to 10 (MRSKARARKL). Residues 1–66 (MRSKARARKL…SEDFTPKEGS (66 aa)) form a disordered region. The SET domain occupies 82–211 (PDFELRESSI…PGEELLVHVK (130 aa)). Residues 230–255 (FRCDECDELFQCRLDLRRHKKYACSS) form a C2H2-type 1; degenerate zinc finger. 5 consecutive C2H2-type zinc fingers follow at residues 282 to 304 (HECK…MIVH), 310 to 332 (YKCD…QMSH), 338 to 361 (FECE…RSQH), 367 to 389 (HACP…KHIH), and 395 to 417 (FICE…KRMH). A C2H2-type 7; atypical zinc finger spans residues 424 to 446 (IKCKDCGQMFSTTSSLNKHRRFC). Disordered stretches follow at residues 592-658 (VKNR…VPPG) and 789-838 (APKV…GVSE). Residues 610-625 (TTTGTDLDTTTGTGSD) are compositionally biased toward low complexity. 2 stretches are compositionally biased toward basic and acidic residues: residues 631–648 (DSDR…ESKP) and 821–835 (REPR…RKPG). Residues 680–1038 (EEQLLTASGA…KHEHEGAPVS (359 aa)) form an interaction with CTBP1, CTBP2 and ZNF516 region. A mediates interaction with SKI and regulation of TGF-beta signaling region spans residues 740–1275 (PFTDRALAHN…SGAFNPINHL (536 aa)). C2H2-type zinc fingers lie at residues 951-973 (YTCR…LRTH), 979-1002 (YRCK…RNIH), and 1008-1030 (FKCH…LKKH). 2 disordered regions span residues 1027–1065 (LKKH…HALL) and 1084–1169 (EMNQ…MGFD). Residues 1038–1058 (SQHSGVLTNHLGTSASSPTSE) are compositionally biased toward polar residues. The segment covering 1117-1133 (DVEEEEEEELEEEDDDS) has biased composition (acidic residues).

This sequence belongs to the PRDM16 family. Interacts with CEBPA, CEBPB and CEBPD; the interaction is direct. Interacts with PPARG and PPARA; controls brown adipocytes. Interacts with CTBP1 and CTBP2; represses the expression of WAT-specific genes. Interacts with PPARGC1A and PPARGC1B; interaction with PPARGC1A or PPARGC1B activates the transcription of BAT-specific gene. Interacts with HDAC1, SKI and SMAD2; the interaction with SKI promotes the recruitment of SMAD3-HDAC1 complex on the promoter of TGF-beta target genes. Interacts with ZNF516; the interaction is direct and may play a role in the transcription of brown adipose tissue-specific gene. As to expression, enriched in BAT compared to WAT. Detected in heart, lung, kidney and brain. Expressed in nuclei of cardiomyocytes.

It localises to the nucleus. It is found in the cytoplasm. The catalysed reaction is L-lysyl(9)-[histone H3] + S-adenosyl-L-methionine = N(6)-methyl-L-lysyl(9)-[histone H3] + S-adenosyl-L-homocysteine + H(+). Its function is as follows. Binds DNA and functions as a transcriptional regulator. Displays histone methyltransferase activity and monomethylates 'Lys-9' of histone H3 (H3K9me1) in vitro. Probably catalyzes the monomethylation of free histone H3 in the cytoplasm which is then transported to the nucleus and incorporated into nucleosomes where SUV39H methyltransferases use it as a substrate to catalyze histone H3 'Lys-9' trimethylation. Likely to be one of the primary histone methyltransferases along with MECOM/PRDM3 that direct cytoplasmic H3K9me1 methylation. Functions in the differentiation of brown adipose tissue (BAT) which is specialized in dissipating chemical energy in the form of heat in response to cold or excess feeding while white adipose tissue (WAT) is specialized in the storage of excess energy and the control of systemic metabolism. Together with CEBPB, regulates the differentiation of myoblastic precursors into brown adipose cells. Functions as a repressor of TGF-beta signaling. The polypeptide is Histone-lysine N-methyltransferase PRDM16 (Mus musculus (Mouse)).